The chain runs to 671 residues: Vinexin (671 aa).

The residue at position 2 (Gln2) is an N-acetylalanine. Position 6 is a phosphoserine (Arg6). Disordered regions lie at residues 46–111, 166–215, 249–268, 295–324, and 337–383; these read LNFQ…TKDS, TFEE…RPGA, LETGQRPKKPLVDDPGEKPS, TRLPSPKSSPAPRRAPEQRPPAGPASAWSS, and SLSP…KKRK. Residues 88–108 show a composition bias toward polar residues; that stretch reads PSASTKIPASQHTQNWSATWT. The 73-residue stretch at 115–187 folds into the SoHo domain; it reads DKRWVKYEGI…GAQQRPAHRP (73 aa). Residue Ser348 is modified to Phosphoserine. The segment covering 359–368 has biased composition (polar residues); it reads PSSTRDPSAS. SH3 domains are found at residues 380-439 and 454-515; these read KKRK…VLPA and LEYG…VSRE. The tract at residues 380–515 is binds to vinculin; the sequence is KKRKAARLKF…PASYVQVSRE (136 aa). A Phosphoserine modification is found at Ser395. A disordered region spans residues 519–611; it reads RLCDDGPQLP…LGTSSPNTSQ (93 aa). Position 530 is a phosphoserine; by MAPK1 (Ser530). The segment covering 535-553 has biased composition (low complexity); that stretch reads AAARSARHPSSPSALRSPA. 5 positions are modified to phosphoserine: Ser544, Ser545, Ser547, Ser551, and Ser563. Polar residues predominate over residues 560–584; that stretch reads GQTSPRRTGFSFPTQEPRPQTQNLG. In terms of domain architecture, SH3 3 spans 612 to 671; the sequence is IHWTPYRAMYQYRPQNEDELELREGDRVDVMQQCDDGWFVGVSRRTQKFGTFPGNYVAPV. The binds to SOS stretch occupies residues 612 to 671; it reads IHWTPYRAMYQYRPQNEDELELREGDRVDVMQQCDDGWFVGVSRRTQKFGTFPGNYVAPV.

Interacts with DLG5 through its third SH3 domain. Interacts with vinculin by the first two SH3 domains and the proline rich region of vinculin. Binds to SOS (guanine nucleotide exchange factor of RAS and RAC), through its third SH3 domain. The formation of this complex is down-regulated by phosphorylation of SOS. Interacts with INPPL1/SHIP2, SAFB2, SOCS7 and SRCIN1. Interacts with FASLG. Interacts with MAPK1/ERK2. In terms of processing, phosphorylated at Ser-530 by MAPK1/ERK2 during cell spreading. As to expression, both isoforms are expressed in different tissues like heart, placenta, brain, skeletal muscle and pancreas. Isoform beta is especially found in liver.

The protein localises to the cell junction. Its subcellular location is the cytoplasm. It is found in the cytoskeleton. The protein resides in the nucleus. Vinexin alpha isoform promotes up-regulation of actin stress fiber formation. Vinexin beta isoform plays a role in cell spreading and enhances the activation of JNK/SAPK in response to EGF stimulation by using its third SH3 domain. In Homo sapiens (Human), this protein is Vinexin (SORBS3).